Here is a 274-residue protein sequence, read N- to C-terminus: NH(3)-dependent NAD(+) synthetase (274 aa).

46–53 (GISGGQDS) is a binding site for ATP. Residue D52 participates in Mg(2+) binding. Position 140 (R140) interacts with deamido-NAD(+). T160 contributes to the ATP binding site. E165 lines the Mg(2+) pocket. K173 and D180 together coordinate deamido-NAD(+). Positions 189 and 211 each coordinate ATP. Deamido-NAD(+) is bound at residue 260–261 (HK).

The protein belongs to the NAD synthetase family. Homodimer.

It catalyses the reaction deamido-NAD(+) + NH4(+) + ATP = AMP + diphosphate + NAD(+) + H(+). The protein operates within cofactor biosynthesis; NAD(+) biosynthesis; NAD(+) from deamido-NAD(+) (ammonia route): step 1/1. Its function is as follows. Catalyzes the ATP-dependent amidation of deamido-NAD to form NAD. Uses ammonia as a nitrogen source. The chain is NH(3)-dependent NAD(+) synthetase from Streptococcus pyogenes serotype M18 (strain MGAS8232).